We begin with the raw amino-acid sequence, 168 residues long: MTQLIMGIDPGTLVSGYAIILVEQRYKIRAHSYGAIRLSSKDSLTQRYKQLFQTISGVLNDITPDAVVLETQYVHKNPQSTIKLGMARGVLVLAAALRDIPVFEYAPNVAKRAVVGRGNASKQQVQLMVSKMLNIPDVLNANCEDIADAFALAICHAHTSSYDFLGVR.

Catalysis depends on residues D9, E70, and D145. Mg(2+) contacts are provided by D9, E70, and D145.

Belongs to the RuvC family. Homodimer which binds Holliday junction (HJ) DNA. The HJ becomes 2-fold symmetrical on binding to RuvC with unstacked arms; it has a different conformation from HJ DNA in complex with RuvA. In the full resolvosome a probable DNA-RuvA(4)-RuvB(12)-RuvC(2) complex forms which resolves the HJ. Mg(2+) is required as a cofactor.

It is found in the cytoplasm. It carries out the reaction Endonucleolytic cleavage at a junction such as a reciprocal single-stranded crossover between two homologous DNA duplexes (Holliday junction).. The RuvA-RuvB-RuvC complex processes Holliday junction (HJ) DNA during genetic recombination and DNA repair. Endonuclease that resolves HJ intermediates. Cleaves cruciform DNA by making single-stranded nicks across the HJ at symmetrical positions within the homologous arms, yielding a 5'-phosphate and a 3'-hydroxyl group; requires a central core of homology in the junction. The consensus cleavage sequence is 5'-(A/T)TT(C/G)-3'. Cleavage occurs on the 3'-side of the TT dinucleotide at the point of strand exchange. HJ branch migration catalyzed by RuvA-RuvB allows RuvC to scan DNA until it finds its consensus sequence, where it cleaves and resolves the cruciform DNA. The chain is Crossover junction endodeoxyribonuclease RuvC from Chlamydia felis (strain Fe/C-56) (Chlamydophila felis).